We begin with the raw amino-acid sequence, 511 residues long: Exodeoxyribonuclease 7 large subunit (511 aa).

Belongs to the XseA family. Heterooligomer composed of large and small subunits.

Its subcellular location is the cytoplasm. The enzyme catalyses Exonucleolytic cleavage in either 5'- to 3'- or 3'- to 5'-direction to yield nucleoside 5'-phosphates.. Functionally, bidirectionally degrades single-stranded DNA into large acid-insoluble oligonucleotides, which are then degraded further into small acid-soluble oligonucleotides. This chain is Exodeoxyribonuclease 7 large subunit, found in Brucella canis (strain ATCC 23365 / NCTC 10854 / RM-666).